A 400-amino-acid chain; its full sequence is Nicotinate phosphoribosyltransferase (400 aa).

H220 is modified (phosphohistidine; by autocatalysis).

This sequence belongs to the NAPRTase family. Post-translationally, transiently phosphorylated on a His residue during the reaction cycle. Phosphorylation strongly increases the affinity for substrates and increases the rate of nicotinate D-ribonucleotide production. Dephosphorylation regenerates the low-affinity form of the enzyme, leading to product release.

The enzyme catalyses nicotinate + 5-phospho-alpha-D-ribose 1-diphosphate + ATP + H2O = nicotinate beta-D-ribonucleotide + ADP + phosphate + diphosphate. Its pathway is cofactor biosynthesis; NAD(+) biosynthesis; nicotinate D-ribonucleotide from nicotinate: step 1/1. Functionally, catalyzes the synthesis of beta-nicotinate D-ribonucleotide from nicotinate and 5-phospho-D-ribose 1-phosphate at the expense of ATP. The sequence is that of Nicotinate phosphoribosyltransferase from Escherichia fergusonii (strain ATCC 35469 / DSM 13698 / CCUG 18766 / IAM 14443 / JCM 21226 / LMG 7866 / NBRC 102419 / NCTC 12128 / CDC 0568-73).